Reading from the N-terminus, the 1071-residue chain is MLDDDKGTAMHPHITPFTPEYSNELLRRVQDLYHEDIKHYYPQLKLEKLLDLLEHTEYLFELYLDSIHHDRPNDALTAFIIGCYYVFLIIPQSLQFQTRNKSYSIYTDLKKMYENEMNMTNVVLMVKKEIGVVLDESVKHGAGIEHRITKKRAFSVPADDLSGQVASLSLDTAAPQDHGLKGTFTEDDAEQSSPVWTAPNLEPNDQLKLALLPEVIPTPAFREPERKTSVPVRPSVLLEDVPSIYHEDDTSFASLNPPFREITADRSVTHRKDSYHSVYMVDSGNLKEDNDDLFNVENDGFIQSLDILQKQSIITAPELFSILSNRVEREKVLLIDLRIPQRSAINHIVAPNLVNVDPNLLWDKQTNTPIYKDDILEHLLKENENFINRNKFDYIVYYTDVKTFMTINFDYAFIFFYLMLTSQKTPLTTVPTTLLGGYEKWKKTLHSYAQEYHISIEDYLYRPYSQKARLQQEQQQQQQQPDSQDSFSAKESSTKVPEPPSWKPPDLPIRLRKRPPPPPPVSMPTTPEIPPPLPPKIMVHSQVSSISRKPPIPAKQHVKKEQLNSNEIIQRKRQHQHQHYDQQILQPQRAYNIPTIERSPNVYVSLSITGLRNLGNTCYINSMIQCLFAAKTFRTLFISSKYKSYLQPIRSNGSHYSPKLSNSLSMLFNKMYLNGGCSVVPTGFLKVINQLRPDLKIPDDQQDTQEFLMILLDRLHDELSDQQHVANDYPNLLLYNADALKVSNNEYKHWFDKNVIGNGISPIDDIFQGQMENSLQCKRCGYTTFNYSTFYVLSLAIPRRSMKLSKLGRSTEKRVKLEDCINMFTSDEVLSGENAWDCPRCGPTASVSTSVSALENEPSIVKSKKKKSRFFTLHTGTKRRHLDFFGDGITEGHNSNNNNTTIFERERSRSPFRMLGGSGKRSSSSTPFSTGGNDSNNSSDYKNKKLTTVKTINFVTLPKILVIHLSRFYYDLTKKNNTVVTYPLILNIILKNNDTMKYKLFGVVNHTGTLISGHYTSLVNKDLEHNVNIGRSKWYYFDDEVVKADRKHGSDKNLKISSSDVYVLFYERVYD.

The segment at 467 to 532 is disordered; sequence KARLQQEQQQ…MPTTPEIPPP (66 aa). Positions 471-480 are enriched in low complexity; the sequence is QQEQQQQQQQ. The span at 481–495 shows a compositional bias: polar residues; the sequence is PDSQDSFSAKESSTK. 2 stretches are compositionally biased toward pro residues: residues 497-507 and 516-532; these read PEPPSWKPPDL and PPPP…IPPP. The USP domain occupies 609–1069; that stretch reads TGLRNLGNTC…DVYVLFYERV (461 aa). C618 serves as the catalytic Nucleophile. Residues 913–942 form a disordered region; the sequence is RMLGGSGKRSSSSTPFSTGGNDSNNSSDYK. Residues 920–932 are compositionally biased toward polar residues; sequence KRSSSSTPFSTGG. Catalysis depends on H1014, which acts as the Proton acceptor.

It belongs to the peptidase C19 family.

The protein localises to the cytoplasm. The enzyme catalyses Thiol-dependent hydrolysis of ester, thioester, amide, peptide and isopeptide bonds formed by the C-terminal Gly of ubiquitin (a 76-residue protein attached to proteins as an intracellular targeting signal).. Functionally, involved in the sorting of ubiquitinated cargo proteins at the multivesicular body (MVB). The chain is Ubiquitin carboxyl-terminal hydrolase 7 (UBP7) from Saccharomyces cerevisiae (strain ATCC 204508 / S288c) (Baker's yeast).